Consider the following 466-residue polypeptide: Fumarate hydratase class II (466 aa).

Substrate-binding positions include 99–101 (SGT), 129–132 (HPND), 139–141 (SSN), and T187. H188 (proton donor/acceptor) is an active-site residue. The active site involves S318. Substrate-binding positions include S319 and 324–326 (KVN).

It belongs to the class-II fumarase/aspartase family. Fumarase subfamily. As to quaternary structure, homotetramer.

The protein resides in the cytoplasm. The enzyme catalyses (S)-malate = fumarate + H2O. It participates in carbohydrate metabolism; tricarboxylic acid cycle; (S)-malate from fumarate: step 1/1. Its function is as follows. Involved in the TCA cycle. Catalyzes the stereospecific interconversion of fumarate to L-malate. In Thermus thermophilus (strain ATCC BAA-163 / DSM 7039 / HB27), this protein is Fumarate hydratase class II.